The sequence spans 456 residues: Enolase (456 aa).

Residue Gln-177 coordinates (2R)-2-phosphoglycerate. The active-site Proton donor is Glu-219. Positions 256, 310, and 337 each coordinate Mg(2+). Residues Lys-362, Arg-391, Ser-392, and Lys-413 each contribute to the (2R)-2-phosphoglycerate site. Lys-362 serves as the catalytic Proton acceptor.

It belongs to the enolase family. Homodimer. Requires Mg(2+) as cofactor.

The protein localises to the cytoplasm. It is found in the secreted. The protein resides in the cell surface. The enzyme catalyses (2R)-2-phosphoglycerate = phosphoenolpyruvate + H2O. It participates in carbohydrate degradation; glycolysis; pyruvate from D-glyceraldehyde 3-phosphate: step 4/5. In terms of biological role, catalyzes the reversible conversion of 2-phosphoglycerate (2-PG) into phosphoenolpyruvate (PEP). It is essential for the degradation of carbohydrates via glycolysis. Functionally, 'Moonlights' as a plasminogen receptor. Binds plasminogen, but no fibronectin binding was observed. Plasminogen binding increases bacterial adherence to host cells; plasmin activity leads to degradation of host extracellular matrix proteins, facilitating bacterial dissemination and disease spread. This Mycoplasma pneumoniae (strain ATCC 29342 / M129 / Subtype 1) (Mycoplasmoides pneumoniae) protein is Enolase.